Reading from the N-terminus, the 688-residue chain is T-box transcription factor TBX2-A (688 aa).

Positions Leu104 to Asp277 form a DNA-binding region, T-box. Disordered stretches follow at residues Cys301 to Ser436 and Pro606 to Lys688. Composition is skewed to basic and acidic residues over residues Asn340 to Ser361, Arg378 to Ser403, and Ser412 to Pro430. The segment covering Pro621 to Pro636 has biased composition (low complexity). Residues Ala655–Glu679 are a coiled coil. Basic and acidic residues predominate over residues Ser676–Lys688.

In terms of assembly, binds DNA as a monomer.

The protein localises to the nucleus. In terms of biological role, transcription factor which acts as a transcriptional repressor. May also function as a transcriptional activator. Binds to the palindromic T site 5'-TTCACACCTAGGTGTGAA-3' DNA sequence, or a half-site, which are present in the regulatory region of several genes. The polypeptide is T-box transcription factor TBX2-A (tbx2-a) (Xenopus laevis (African clawed frog)).